Reading from the N-terminus, the 75-residue chain is Transcription attenuation protein MtrB (75 aa).

Belongs to the MtrB family. In terms of assembly, oligomer of 11 identical subunits arranged in doughnut-like structure.

Functionally, required for transcription attenuation control in the Trp operon. This trans-acting factor seems to recognize a 10 bases nucleotide sequence in the Trp leader transcript causing transcription termination. Binds the leader RNA only in presence of L-tryptophan. In Bacillus velezensis (strain DSM 23117 / BGSC 10A6 / LMG 26770 / FZB42) (Bacillus amyloliquefaciens subsp. plantarum), this protein is Transcription attenuation protein MtrB.